The primary structure comprises 214 residues: Scytalone dehydratase-like protein mdpB (214 aa).

Residues Tyr40 and Tyr60 each contribute to the substrate site. Catalysis depends on residues His95 and His120.

This sequence belongs to the scytalone dehydratase family.

The protein operates within secondary metabolite biosynthesis. Scytalone dehydratase-like protein; part of the gene cluster that mediates the biosynthesis of monodictyphenone, a prenyl xanthone derivative. The pathway begins with the synthesis of atrochrysone thioester by the polyketide synthase (PKS) mdpG. The atrochrysone carboxyl ACP thioesterase mdpF then breaks the thioester bond and releases the atrochrysone carboxylic acid from mdpG. The atrochrysone carboxylic acid is then converted to atrochrysone which is further transformed into emodin anthrone. The next step is performed by the anthrone oxygenase mdpH that catalyzes the oxidation of emodinanthrone to emodin. Emodin is further modified to yield monodictyphenone via several steps involving mdpB, mdpC mdpJ, mdpK and mdpL. These enzymes with xptA, xptB and xptC are also proposed to be involved in the synthesis of shamixanthone from emodin. Especially, direct reduction of emodin by the short chain dehydrogenase mdpC followed by dehydration catalyzed by the scytalone dehydratase-like protein mdpB gives loss of oxygen and formation of chrysophanol intermediate in two simple steps. This chain is Scytalone dehydratase-like protein mdpB, found in Emericella nidulans (strain FGSC A4 / ATCC 38163 / CBS 112.46 / NRRL 194 / M139) (Aspergillus nidulans).